Consider the following 100-residue polypeptide: UPF0213 protein YhbQ (100 aa).

In terms of domain architecture, GIY-YIG spans threonine 2–arginine 77.

Belongs to the UPF0213 family.

The sequence is that of UPF0213 protein YhbQ from Escherichia coli O81 (strain ED1a).